The sequence spans 580 residues: 2-isopropylmalate synthase (580 aa).

Over residues Met-1–Thr-11 the composition is skewed to polar residues. Residues Met-1–Arg-37 form a disordered region. The 274-residue stretch at Pro-61–Asp-334 folds into the Pyruvate carboxyltransferase domain. Positions 70, 273, 275, and 309 each coordinate Mg(2+). Positions Glu-476–Gly-580 are regulatory domain.

It belongs to the alpha-IPM synthase/homocitrate synthase family. LeuA type 2 subfamily. As to quaternary structure, homodimer. The cofactor is Mg(2+).

The protein resides in the cytoplasm. The catalysed reaction is 3-methyl-2-oxobutanoate + acetyl-CoA + H2O = (2S)-2-isopropylmalate + CoA + H(+). It participates in amino-acid biosynthesis; L-leucine biosynthesis; L-leucine from 3-methyl-2-oxobutanoate: step 1/4. Its function is as follows. Catalyzes the condensation of the acetyl group of acetyl-CoA with 3-methyl-2-oxobutanoate (2-ketoisovalerate) to form 3-carboxy-3-hydroxy-4-methylpentanoate (2-isopropylmalate). This Nocardia farcinica (strain IFM 10152) protein is 2-isopropylmalate synthase.